A 315-amino-acid polypeptide reads, in one-letter code: Ribonuclease Z (315 aa).

The Zn(2+) site is built by His-62, His-64, Asp-66, His-67, His-144, Asp-215, and His-273. Asp-66 serves as the catalytic Proton acceptor.

Belongs to the RNase Z family. As to quaternary structure, homodimer. The cofactor is Zn(2+).

It catalyses the reaction Endonucleolytic cleavage of RNA, removing extra 3' nucleotides from tRNA precursor, generating 3' termini of tRNAs. A 3'-hydroxy group is left at the tRNA terminus and a 5'-phosphoryl group is left at the trailer molecule.. Zinc phosphodiesterase, which displays some tRNA 3'-processing endonuclease activity. Probably involved in tRNA maturation, by removing a 3'-trailer from precursor tRNA. The polypeptide is Ribonuclease Z (Synechococcus sp. (strain CC9311)).